Reading from the N-terminus, the 391-residue chain is uncharacterized protein (391 aa).

2 WD repeats span residues 137-179 (VNDI…PILA) and 182-222 (PLSS…SAEE).

The protein localises to the cytoplasm. It is found in the nucleus. This is an uncharacterized protein from Schizosaccharomyces pombe (strain 972 / ATCC 24843) (Fission yeast).